Reading from the N-terminus, the 605-residue chain is Capsid scaffolding protein (605 aa).

Active-site charge relay system residues include His52, Ser120, and His139. The segment at 326–344 is interaction with pAP; that stretch reads GEFVLIPTAYYSQLLTGQT. Residues 585 to 605 form an interaction with major capsid protein region; it reads IQGSTADDADMFANQMMVGRC.

It belongs to the herpesviridae capsid scaffolding protein family. In terms of assembly, homomultimer. Interacts with major capsid protein. As to quaternary structure, exists in a monomer-dimer equilibrium with the dimer being the active species. Post-translationally, capsid scaffolding protein is cleaved by assemblin after formation of the spherical procapsid. As a result, the capsid obtains its mature, icosahedral shape. Cleavages occur at two or more sites: release (R-site) and maturation (M-site).

It localises to the host cytoplasm. It is found in the host nucleus. It carries out the reaction Cleaves -Ala-|-Ser- and -Ala-|-Ala- bonds in the scaffold protein.. In terms of biological role, acts as a scaffold protein by binding major capsid protein in the cytoplasm, inducing the nuclear localization of both proteins. Multimerizes in the nucleus such as major capsid protein forms the icosahedral T=16 capsid. Autocatalytic cleavage releases the assembly protein, and subsequently abolishes interaction with major capsid protein. Cleavages products are evicted from the capsid before or during DNA packaging. Its function is as follows. Protease that plays an essential role in virion assembly within the nucleus. Catalyzes the cleavage of the assembly protein after formation of the spherical procapsid. By that cleavage, the capsid matures and gains its icosahedral shape. The cleavage sites seem to include -Ala-Ser-, -Ala-Ala-, as well as Ala-Thr bonds. Assemblin and cleavages products are evicted from the capsid before or during DNA packaging. Plays a major role in capsid assembly. Acts as a scaffold protein by binding major capsid protein. Multimerizes in the nucleus such as major capsid protein forms the icosahedral T=16 capsid. Cleaved by assemblin after capsid completion. The cleavages products are evicted from the capsid before or during DNA packaging. The polypeptide is Capsid scaffolding protein (33) (Varicella-zoster virus (strain Dumas) (HHV-3)).